The primary structure comprises 451 residues: uncharacterized protein (451 aa).

In terms of domain architecture, TRAM spans 2 to 60; it reads VVKVKQKIPLKIKRMGINGEGIGFYQKTLVFVPGALKGENIFCQITAVKRNFAEAKLLT. The [4Fe-4S] cluster site is built by C73, C79, C82, and C162. 4 residues coordinate S-adenosyl-L-methionine: Q283, Y312, D333, and D381. Catalysis depends on C408, which acts as the Nucleophile.

This sequence belongs to the class I-like SAM-binding methyltransferase superfamily. RNA M5U methyltransferase family.

This is an uncharacterized protein from Streptococcus pyogenes serotype M3 (strain ATCC BAA-595 / MGAS315).